The chain runs to 107 residues: Regulatory protein SoxS (107 aa).

Positions 8-106 (QDLIAWIDEH…DRTPSDYRHR (99 aa)) constitute an HTH araC/xylS-type domain. 2 DNA-binding regions (H-T-H motif) span residues 25–46 (DVVA…RTVT) and 73–96 (IFDI…RRQF).

It localises to the cytoplasm. Its function is as follows. Transcriptional activator of the superoxide response regulon of E.coli that includes at least 10 genes such as sodA, nfo, zwf and micF. Binds the DNA sequence 5'-GCACN(7)CAA-3'. It also facilitates the subsequent binding of RNA polymerase to the micF and the nfo promoters. The chain is Regulatory protein SoxS (soxS) from Escherichia coli O157:H7.